The chain runs to 114 residues: Large ribosomal subunit protein bL20 (114 aa).

This sequence belongs to the bacterial ribosomal protein bL20 family.

Binds directly to 23S ribosomal RNA and is necessary for the in vitro assembly process of the 50S ribosomal subunit. It is not involved in the protein synthesizing functions of that subunit. The polypeptide is Large ribosomal subunit protein bL20 (Parabacteroides distasonis (strain ATCC 8503 / DSM 20701 / CIP 104284 / JCM 5825 / NCTC 11152)).